Here is a 1405-residue protein sequence, read N- to C-terminus: Protein translocase subunit SecA (1405 aa).

The protein translocase subunit SecA stretch occupies residues Met-1–Glu-1099. ATP-binding positions include Gln-88, Gly-106–Ser-110, and Asp-494. The interval Ser-1100 to Lys-1405 is unknown.

It belongs to the SecA family. As to quaternary structure, monomer and homodimer. Part of the essential Sec protein translocation apparatus which comprises SecA, SecYEG and auxiliary proteins SecDF. Other proteins may also be involved.

The protein localises to the cell membrane. It localises to the cytoplasm. The catalysed reaction is ATP + H2O + cellular proteinSide 1 = ADP + phosphate + cellular proteinSide 2.. Part of the Sec protein translocase complex. Interacts with the SecYEG preprotein conducting channel. Has a central role in coupling the hydrolysis of ATP to the transfer of proteins into and across the cell membrane, serving as an ATP-driven molecular motor driving the stepwise translocation of polypeptide chains across the membrane. In Malacoplasma penetrans (strain HF-2) (Mycoplasma penetrans), this protein is Protein translocase subunit SecA.